The primary structure comprises 64 residues: Large ribosomal subunit protein bL35 (64 aa).

Positions 1–25 (MPKMKTHRGAAKRLKKTGTGKLKRA) are disordered.

Belongs to the bacterial ribosomal protein bL35 family.

In Clostridioides difficile (strain 630) (Peptoclostridium difficile), this protein is Large ribosomal subunit protein bL35.